Here is a 451-residue protein sequence, read N- to C-terminus: Glutamyl-tRNA reductase (451 aa).

Residues 49-52, Ser-109, 114-116, and Gln-120 contribute to the substrate site; these read TCNR and EQQ. Cys-50 functions as the Nucleophile in the catalytic mechanism. Position 190–195 (190–195) interacts with NADP(+); that stretch reads GAGAMG.

This sequence belongs to the glutamyl-tRNA reductase family. In terms of assembly, homodimer.

The enzyme catalyses (S)-4-amino-5-oxopentanoate + tRNA(Glu) + NADP(+) = L-glutamyl-tRNA(Glu) + NADPH + H(+). Its pathway is porphyrin-containing compound metabolism; protoporphyrin-IX biosynthesis; 5-aminolevulinate from L-glutamyl-tRNA(Glu): step 1/2. In terms of biological role, catalyzes the NADPH-dependent reduction of glutamyl-tRNA(Glu) to glutamate 1-semialdehyde (GSA). The polypeptide is Glutamyl-tRNA reductase (Mycolicibacterium smegmatis (strain ATCC 700084 / mc(2)155) (Mycobacterium smegmatis)).